Reading from the N-terminus, the 256-residue chain is Small ribosomal subunit protein uS3 (256 aa).

In terms of domain architecture, KH type-2 spans 39–111 (IREFLNENFS…EVILNIIEVR (73 aa)). Residues 219-256 (DTRKPFEAGNQKRGQKRRPRNDQPGQRPQQRNRNSKED) form a disordered region. The segment covering 240 to 250 (DQPGQRPQQRN) has biased composition (low complexity).

The protein belongs to the universal ribosomal protein uS3 family. As to quaternary structure, part of the 30S ribosomal subunit. Forms a tight complex with proteins S10 and S14.

In terms of biological role, binds the lower part of the 30S subunit head. Binds mRNA in the 70S ribosome, positioning it for translation. The protein is Small ribosomal subunit protein uS3 of Acholeplasma laidlawii (strain PG-8A).